Consider the following 975-residue polypeptide: MSGIGSKRAAGEPGTSVPPEKKTAVEDSGTTVETIKLGGVSSTEELDIRTLQTKNRKLAEMLDQRQAIEDELREHIEKLERRQATDDASLLIVNRYWSQFDENIRIILKRYDLEQGLGDLLTERKALVVPEPEPDSDSNQERKDDRERGEGQEPAFSFLATLASSSSEEMESQLQERVESSRRAVSQIVTVYDKLQEKVELLSRKLNSGDSLMVEEAVQELNSFLAQENTRLQELTDLLQEKHCTMSQEFSKLQSKVETAESRVSVLESMIDDLQWDIDKIRKREQRLNRHLAEVLERVNSKGYKVYGAGSSLYGGTITINARKFEEMNAELEENKELAQNRHCELEKLRQDFEEVTSQNEKLKVELRSAVEEVVKETPEYRCMQSQFSVLYNESLQLKAHLDEARTLLHGTRGTHQRQVELIERDEVSLHKKLRTEVIQLEDTLAQVRKEYEMLRIEFEQTLAANEQAGPINREMRHLISSLQNHNHQLKGEVLRYKRKLREAQSDLNKTRLRSGSALLQSQSSTEDPKDEPAELKQDSEDLATQSAASKASQEEVNEIKSKRDEEERERERREKEREREREREKEKEREREKQKLKESEKERESAKDKEKGKHDDGRKKEAEIIKQLKIELKKAQESQKEMKLLLDMYRSAPKEQRDKVQLMAAEKKSKAELEDLRQRLKDLEDKEKKENKKMADEDALRKIRAVEEQIEYLQKKLAMAKQEEEALLSEMDVTGQAFEDMQEQNIRLMQQLREKDDANFKLMSERIKSNQIHKLLKEEKEELADQVLTLKTQVDAQLQVVRKLEEKEHLLQSNIGTGEKELGLRTQALEMNKRKAMEAAQLADDLKAQLEMAQKKLHDFQDEIVENSVTKEKDMFNFKRAQEDISRLRRKLETTKKPDNVPKCDEILMEEIKDYKARLTCPCCNMRKKDAVLTKCFHVFCFECVKTRYDTRQRKCPKCNAAFGANDFHRIYIG.

The disordered stretch occupies residues 1 to 37 (MSGIGSKRAAGEPGTSVPPEKKTAVEDSGTTVETIKL). Lys-21 is subject to N6-acetyllysine. Ser-41 bears the Phosphoserine mark. The stretch at 43–90 (TEELDIRTLQTKNRKLAEMLDQRQAIEDELREHIEKLERRQATDDASL) forms a coiled coil. Residues 125-155 (KALVVPEPEPDSDSNQERKDDRERGEGQEPA) are disordered. A phosphoserine mark is found at Ser-136 and Ser-138. Basic and acidic residues predominate over residues 139–151 (NQERKDDRERGEG). 2 coiled-coil regions span residues 168–375 (EEME…EEVV) and 429–898 (SLHK…TTKK). Lys-348 and Lys-510 each carry N6-acetyllysine. The segment at 507–622 (DLNKTRLRSG…GKHDDGRKKE (116 aa)) is disordered. Position 522 is a phosphoserine (Ser-522). The segment covering 527–540 (EDPKDEPAELKQDS) has biased composition (basic and acidic residues). Polar residues predominate over residues 543-552 (LATQSAASKA). Over residues 558–622 (NEIKSKRDEE…GKHDDGRKKE (65 aa)) the composition is skewed to basic and acidic residues. Phosphoserine is present on Ser-562. Residues 922–961 (CPCCNMRKKDAVLTKCFHVFCFECVKTRYDTRQRKCPKCN) form an RING-type zinc finger.

This sequence belongs to the BRE1 family. Component of the RNF20/40 complex (also known as BRE1 complex) probably composed of 2 copies of RNF20/BRE1A and 2 copies of RNF40/BRE1B. Interacts with UBE2E1/UBCH6. Interacts with p53/TP53 and WAC. Interacts with PAF1; the interaction mediates the association of the PAF1 and RNF20/40 complexes which is a prerequsite for recruitment of UBE2A/B. Interacts with PA2G4. Interacts with FBXL19.

The protein resides in the nucleus. It catalyses the reaction S-ubiquitinyl-[E2 ubiquitin-conjugating enzyme]-L-cysteine + [acceptor protein]-L-lysine = [E2 ubiquitin-conjugating enzyme]-L-cysteine + N(6)-ubiquitinyl-[acceptor protein]-L-lysine.. The protein operates within protein modification; protein ubiquitination. Component of the RNF20/40 E3 ubiquitin-protein ligase complex that mediates monoubiquitination of 'Lys-120' of histone H2B (H2BK120ub1). H2BK120ub1 gives a specific tag for epigenetic transcriptional activation and is also prerequisite for histone H3 'Lys-4' and 'Lys-79' methylation (H3K4me and H3K79me, respectively). It thereby plays a central role in histone code and gene regulation. The RNF20/40 complex forms a H2B ubiquitin ligase complex in cooperation with the E2 enzyme UBE2A or UBE2B; reports about the cooperation with UBE2E1/UBCH are contradictory. Required for transcriptional activation of Hox genes. Recruited to the MDM2 promoter, probably by being recruited by p53/TP53, and thereby acts as a transcriptional coactivator. Mediates the polyubiquitination of PA2G4 leading to its proteasome-mediated degradation. The polypeptide is E3 ubiquitin-protein ligase BRE1A (RNF20) (Bos taurus (Bovine)).